Consider the following 220-residue polypeptide: Probable septum site-determining protein MinC (220 aa).

It belongs to the MinC family. Interacts with MinD and FtsZ.

In terms of biological role, cell division inhibitor that blocks the formation of polar Z ring septums. Rapidly oscillates between the poles of the cell to destabilize FtsZ filaments that have formed before they mature into polar Z rings. Prevents FtsZ polymerization. This chain is Probable septum site-determining protein MinC, found in Vibrio parahaemolyticus serotype O3:K6 (strain RIMD 2210633).